Here is a 583-residue protein sequence, read N- to C-terminus: Aspartate--tRNA(Asp/Asn) ligase (583 aa).

E172 serves as a coordination point for L-aspartate. An aspartate region spans residues 196-199; that stretch reads QMLK. R218 contacts L-aspartate. ATP-binding positions include 218–220 and Q227; that span reads RDE. Residue H446 coordinates L-aspartate. Residue E480 participates in ATP binding. R487 contributes to the L-aspartate binding site. An ATP-binding site is contributed by 532–535; the sequence is GLDR.

This sequence belongs to the class-II aminoacyl-tRNA synthetase family. Type 1 subfamily. In terms of assembly, homodimer.

Its subcellular location is the cytoplasm. The enzyme catalyses tRNA(Asx) + L-aspartate + ATP = L-aspartyl-tRNA(Asx) + AMP + diphosphate. Its function is as follows. Aspartyl-tRNA synthetase with relaxed tRNA specificity since it is able to aspartylate not only its cognate tRNA(Asp) but also tRNA(Asn). Reaction proceeds in two steps: L-aspartate is first activated by ATP to form Asp-AMP and then transferred to the acceptor end of tRNA(Asp/Asn). This chain is Aspartate--tRNA(Asp/Asn) ligase, found in Streptococcus mutans serotype c (strain ATCC 700610 / UA159).